Consider the following 105-residue polypeptide: Met repressor (105 aa).

Belongs to the MetJ family. As to quaternary structure, homodimer.

It localises to the cytoplasm. Functionally, this regulatory protein, when combined with SAM (S-adenosylmethionine) represses the expression of the methionine regulon and of enzymes involved in SAM synthesis. In Pectobacterium carotovorum subsp. carotovorum (strain PC1), this protein is Met repressor.